The following is a 297-amino-acid chain: DNA processing protein DprA (297 aa).

This sequence belongs to the DprA/Smf family. As to quaternary structure, interacts with RecA. Interacts with ComFA and ComFC.

The protein localises to the cytoplasm. In terms of biological role, protein that helps load RecA onto ssDNA during transformation. Binds cooperatively to circular ssDNA, is able to bridge different segments of DNA. Favors the loading of RecA onto SsbA- or SsbB-coated ssDNA and formation of RecA-DNA filaments. RecA-ATP cannot catalyze homologous DNA strand exchange; SsbA and DprA activate strand exchange by RecA-ATP. The sequence is that of DNA processing protein DprA from Bacillus subtilis (strain 168).